Reading from the N-terminus, the 292-residue chain is Acetyl-coenzyme A carboxylase carboxyl transferase subunit beta (292 aa).

Residues 29-292 form the CoA carboxyltransferase N-terminal domain; that stretch reads LWSKCPECGQ…HGCLQGSAAV (264 aa). Zn(2+)-binding residues include cysteine 33, cysteine 36, cysteine 52, and cysteine 55. The C4-type zinc finger occupies 33-55; it reads CPECGQVVYRKDLLANASVCSNC.

The protein belongs to the AccD/PCCB family. As to quaternary structure, acetyl-CoA carboxylase is a heterohexamer composed of biotin carboxyl carrier protein (AccB), biotin carboxylase (AccC) and two subunits each of ACCase subunit alpha (AccA) and ACCase subunit beta (AccD). The cofactor is Zn(2+).

The protein resides in the cytoplasm. It carries out the reaction N(6)-carboxybiotinyl-L-lysyl-[protein] + acetyl-CoA = N(6)-biotinyl-L-lysyl-[protein] + malonyl-CoA. Its pathway is lipid metabolism; malonyl-CoA biosynthesis; malonyl-CoA from acetyl-CoA: step 1/1. Functionally, component of the acetyl coenzyme A carboxylase (ACC) complex. Biotin carboxylase (BC) catalyzes the carboxylation of biotin on its carrier protein (BCCP) and then the CO(2) group is transferred by the transcarboxylase to acetyl-CoA to form malonyl-CoA. The protein is Acetyl-coenzyme A carboxylase carboxyl transferase subunit beta of Synechococcus sp. (strain WH7803).